A 193-amino-acid polypeptide reads, in one-letter code: MTISLAKGQKVDLTKTNPGLSKVVVGLGWDTNKYDGGHDFDLDSSVFLLDAAGKCASPNDFIFYNQLEGGNGSVVHSGDNLTGAGEGDDENVKVNLSAVPANIDKISFVITIHDAEARSQNFGQVSNAFVRIVNEETNEELIRYDLAEDFSIETAIIAGELYRHNGEWKFSAIGSGYQGGLARIATDYGLQVG.

This sequence belongs to the CAPAB/TerDEXZ family.

This is General stress protein 16U (yceD) from Bacillus subtilis (strain 168).